We begin with the raw amino-acid sequence, 363 residues long: D-alanine--D-alanine ligase (363 aa).

Positions 146–352 (KLCAADAGVA…FTALIDKLLH (207 aa)) constitute an ATP-grasp domain. Position 179–234 (179–234 (DSTFGYPLFVKPASLGSSVGISKVHLPAALPEALKVACSYDRKILVEAAVSGKEIE)) interacts with ATP. The Mg(2+) site is built by D305, E319, and N321.

This sequence belongs to the D-alanine--D-alanine ligase family. Mg(2+) serves as cofactor. Mn(2+) is required as a cofactor.

It localises to the cytoplasm. It carries out the reaction 2 D-alanine + ATP = D-alanyl-D-alanine + ADP + phosphate + H(+). It functions in the pathway cell wall biogenesis; peptidoglycan biosynthesis. Cell wall formation. This chain is D-alanine--D-alanine ligase, found in Chlorobium limicola (strain DSM 245 / NBRC 103803 / 6330).